The sequence spans 115 residues: U3-lycotoxin-Ls1u (115 aa).

Residues 1-20 (MKFVLLFGVLLVTLFSYSSA) form the signal peptide. Positions 21–44 (EMLDDFDQADEDELLSLIEKEEAR) are excised as a propeptide. Cystine bridges form between C48–C63, C55–C72, and C62–C87.

The protein belongs to the neurotoxin 19 (CSTX) family. 01 subfamily. In terms of tissue distribution, expressed by the venom gland.

The protein localises to the secreted. This is U3-lycotoxin-Ls1u from Lycosa singoriensis (Wolf spider).